Here is a 725-residue protein sequence, read N- to C-terminus: Homeobox-leucine zipper protein HDG3 (725 aa).

Residues 1–74 (MSQSNMVPVA…PRHKKKKYNR (74 aa)) form a disordered region. Residues 11–40 (NNGDNNNDNENNNNNNNNGGTDNTNAGNDS) show a composition bias toward low complexity. A compositionally biased stretch (polar residues) spans 46 to 64 (DSGNTSSGNHGEGLGNNQA). A compositionally biased stretch (basic residues) spans 65-74 (PRHKKKKYNR). A DNA-binding region (homeobox) is located at residues 68-127 (KKKKYNRHTQLQISEMEAFFRECPHPDDKQRYDLSAQLGLDPVQIKFWFQNKRTQNKNQQ). A coiled-coil region spans residues 117 to 201 (QNKRTQNKNQ…SVTAEKISRL (85 aa)). In terms of domain architecture, START spans 243 to 475 (DANTKPIIME…LVRQCERISS (233 aa)).

It belongs to the HD-ZIP homeobox family. Class IV subfamily. Interacts with AIL7/PLT7, ANT, BBM and AIL1. As to expression, expressed in siliques.

It localises to the nucleus. Its function is as follows. Probable transcription factor. Seems to promote cell differentiation. The chain is Homeobox-leucine zipper protein HDG3 from Arabidopsis thaliana (Mouse-ear cress).